Reading from the N-terminus, the 514-residue chain is L-threonine dehydratase biosynthetic IlvA (514 aa).

Position 62 is an N6-(pyridoxal phosphate)lysine (Lys62). Pyridoxal 5'-phosphate is bound by residues Asn89, 188–192, and Ser315; that span reads GGGGL. 2 ACT-like domains span residues 339 to 411 and 434 to 504; these read ALLA…DLSD and RLYS…DETN.

This sequence belongs to the serine/threonine dehydratase family. In terms of assembly, homotetramer. The cofactor is pyridoxal 5'-phosphate.

It catalyses the reaction L-threonine = 2-oxobutanoate + NH4(+). The protein operates within amino-acid biosynthesis; L-isoleucine biosynthesis; 2-oxobutanoate from L-threonine: step 1/1. Isoleucine allosterically inhibits whereas valine allosterically activates this enzyme. Catalyzes the anaerobic formation of alpha-ketobutyrate and ammonia from threonine in a two-step reaction. The first step involved a dehydration of threonine and a production of enamine intermediates (aminocrotonate), which tautomerizes to its imine form (iminobutyrate). Both intermediates are unstable and short-lived. The second step is the nonenzymatic hydrolysis of the enamine/imine intermediates to form 2-ketobutyrate and free ammonia. In the low water environment of the cell, the second step is accelerated by RidA. This is L-threonine dehydratase biosynthetic IlvA (ilvA) from Escherichia coli (strain K12).